Consider the following 473-residue polypeptide: Tryptophanase (473 aa).

Residue lysine 270 is modified to N6-(pyridoxal phosphate)lysine.

The protein belongs to the beta-eliminating lyase family. Homotetramer. Pyridoxal 5'-phosphate serves as cofactor.

The catalysed reaction is L-tryptophan + H2O = indole + pyruvate + NH4(+). Its pathway is amino-acid degradation; L-tryptophan degradation via pyruvate pathway; indole and pyruvate from L-tryptophan: step 1/1. This is Tryptophanase from Vibrio vulnificus (strain CMCP6).